A 778-amino-acid chain; its full sequence is Kin of IRRE-like protein 3 (778 aa).

The N-terminal stretch at Met1 to Gly21 is a signal peptide. Residues Leu22–Ala535 lie on the Extracellular side of the membrane. Ig-like C2-type domains are found at residues Tyr48–Thr142, Pro147–Thr243, Pro249–Asp330, Pro335–Thr415, and Pro419–Lys515. A disulfide bond links Cys69 and Cys127. A glycan (N-linked (GlcNAc...) asparagine) is linked at Asn167. An intrachain disulfide couples Cys170 to Cys227. Residue Asn253 is glycosylated (N-linked (GlcNAc...) asparagine). Cys271 and Cys314 are oxidised to a cystine. N-linked (GlcNAc...) asparagine glycosylation occurs at Asn324. 2 cysteine pairs are disulfide-bonded: Cys356–Cys398 and Cys440–Cys499. Asn498 carries an N-linked (GlcNAc...) asparagine glycan. Residues Val536 to Val556 traverse the membrane as a helical segment. The Cytoplasmic portion of the chain corresponds to Ala557–Val778. The span at Cys727–Lys736 shows a compositional bias: polar residues. The interval Cys727–Val778 is disordered. Over residues Lys748–Gln762 the composition is skewed to low complexity.

Belongs to the immunoglobulin superfamily. As to quaternary structure, homodimer; mediates homophilic interactions to promote cell adhesion. Interacts with NPHS1; forms heterodimers with NPHS1. Interacts with NPHS2/podocin (via the C-terminus). Interacts with CASK. Interacts (via extracellular region) with MAP1B. Interacts (via extracellular region) with MYO16. Interacts (via intracellular region) with ATP1B1. Interacts (via intracellular region) with SHMT2. Interacts (via intracellular region) with UFC1. Post-translationally, undergoes proteolysis by a metalloprotease and gives rise to a soluble form. As to expression, expressed in fetal and adult brain. Also expressed in kidney, specifically in podocytes of kidney glomeruli. Also expressed in skeletal muscle.

It localises to the cell membrane. It is found in the secreted. Its function is as follows. Synaptic adhesion molecule required for the formation of target-specific synapses. Required for formation of target-specific synapses at hippocampal mossy fiber synapses. Required for formation of mossy fiber filopodia, the synaptic structures connecting dentate granule and GABA neurons. Probably acts as a homophilic adhesion molecule that promotes trans-cellular interactions and stabilize mossy fiber filipodia contact and subsequent synapse formation. Required for the coalescence of vomeronasal sensory neuron axons. May be involved in the hematopoietic supportive capacity of stroma cells; the secreted extracellular domain is directly responsible for supporting hematopoietic stem cells. This chain is Kin of IRRE-like protein 3, found in Homo sapiens (Human).